A 129-amino-acid chain; its full sequence is Small ribosomal subunit protein uS11 (129 aa).

It belongs to the universal ribosomal protein uS11 family. As to quaternary structure, part of the 30S ribosomal subunit. Interacts with proteins S7 and S18. Binds to IF-3.

Its function is as follows. Located on the platform of the 30S subunit, it bridges several disparate RNA helices of the 16S rRNA. Forms part of the Shine-Dalgarno cleft in the 70S ribosome. The polypeptide is Small ribosomal subunit protein uS11 (Brucella abortus (strain S19)).